A 108-amino-acid polypeptide reads, in one-letter code: Pyrimidine/purine nucleoside phosphorylase (108 aa).

This sequence belongs to the nucleoside phosphorylase PpnP family.

The enzyme catalyses a purine D-ribonucleoside + phosphate = a purine nucleobase + alpha-D-ribose 1-phosphate. The catalysed reaction is adenosine + phosphate = alpha-D-ribose 1-phosphate + adenine. It catalyses the reaction cytidine + phosphate = cytosine + alpha-D-ribose 1-phosphate. It carries out the reaction guanosine + phosphate = alpha-D-ribose 1-phosphate + guanine. The enzyme catalyses inosine + phosphate = alpha-D-ribose 1-phosphate + hypoxanthine. The catalysed reaction is thymidine + phosphate = 2-deoxy-alpha-D-ribose 1-phosphate + thymine. It catalyses the reaction uridine + phosphate = alpha-D-ribose 1-phosphate + uracil. It carries out the reaction xanthosine + phosphate = alpha-D-ribose 1-phosphate + xanthine. Functionally, catalyzes the phosphorolysis of diverse nucleosides, yielding D-ribose 1-phosphate and the respective free bases. Can use uridine, adenosine, guanosine, cytidine, thymidine, inosine and xanthosine as substrates. Also catalyzes the reverse reactions. The protein is Pyrimidine/purine nucleoside phosphorylase of Polaromonas naphthalenivorans (strain CJ2).